We begin with the raw amino-acid sequence, 126 residues long: Holo-[acyl-carrier-protein] synthase (126 aa).

Residues D9 and E58 each contribute to the Mg(2+) site.

It belongs to the P-Pant transferase superfamily. AcpS family. Mg(2+) is required as a cofactor.

It localises to the cytoplasm. It catalyses the reaction apo-[ACP] + CoA = holo-[ACP] + adenosine 3',5'-bisphosphate + H(+). Transfers the 4'-phosphopantetheine moiety from coenzyme A to a Ser of acyl-carrier-protein. The chain is Holo-[acyl-carrier-protein] synthase from Vibrio vulnificus (strain YJ016).